A 397-amino-acid chain; its full sequence is RNA polymerase II elongation factor ELL3 (397 aa).

Disordered stretches follow at residues 164–219 (VSDP…KRSV) and 237–284 (VPSP…PEDI). The segment covering 168 to 178 (LASNQGQSLPG) has biased composition (polar residues). Over residues 250–262 (QEGEDWEQEDEDM) the composition is skewed to acidic residues. The span at 269–281 (SSSVQEDSESPSP) shows a compositional bias: low complexity. Positions 285 to 395 (PDYLLQYRAI…LILEFEEKNR (111 aa)) constitute an OCEL domain.

Belongs to the ELL/occludin family. Interacts with AFF4. Component of the super elongation complex (SEC), at least composed of EAF1, EAF2, CDK9, MLLT3/AF9, AFF (AFF1 or AFF4), the P-TEFb complex and ELL (ELL, ELL2 or ELL3). Component of the little elongation complex (LEC), at least composed of ELL (ELL, ELL2 or ELL3), ZC3H8, ICE1 and ICE2. As to expression, testis specific.

It is found in the nucleus. In terms of biological role, enhancer-binding elongation factor that specifically binds enhancers in embryonic stem cells (ES cells), marks them, and is required for their future activation during stem cell specification. Does not only bind to enhancer regions of active genes, but also marks the enhancers that are in a poised or inactive state in ES cells and is required for establishing proper RNA polymerase II occupancy at developmentally regulated genes in a cohesin-dependent manner. Probably required for priming developmentally regulated genes for later recruitment of the super elongation complex (SEC), for transcriptional activation during differentiation. Required for recruitment of P-TEFb within SEC during differentiation. Probably preloaded on germ cell chromatin, suggesting that it may prime gene activation by marking enhancers as early as in the germ cells. Promoting epithelial-mesenchymal transition (EMT). Elongation factor component of the super elongation complex (SEC), a complex required to increase the catalytic rate of RNA polymerase II transcription by suppressing transient pausing by the polymerase at multiple sites along the DNA. Component of the little elongation complex (LEC), a complex required to regulate small nuclear RNA (snRNA) gene transcription by RNA polymerase II and III. This Homo sapiens (Human) protein is RNA polymerase II elongation factor ELL3 (ELL3).